Here is a 1697-residue protein sequence, read N- to C-terminus: Neurexin-3a (1697 aa).

An N-terminal signal peptide occupies residues 1 to 23 (MNFFRFPVQLQLLISTVLGPCLG). The Laminin G-like 1 domain occupies 24–198 (LEFTGLQGQW…RVRMDIEGIC (175 aa)). At 24–1622 (LEFTGLQGQW…EVVRESSSTT (1599 aa)) the chain is on the extracellular side. One can recognise an EGF-like 1 domain in the interval 194-231 (IEGICMENPCENGGTCSVVDGEPLCDCSKTEYVGRFCN). Cystine bridges form between cysteine 198/cysteine 209, cysteine 203/cysteine 218, and cysteine 220/cysteine 230. 2 consecutive Laminin G-like domains span residues 258–455 (VATF…VFKC) and 462–654 (DPIS…KPSC). Residues aspartate 304, leucine 321, and methionine 389 each coordinate Ca(2+). 5 cysteine pairs are disulfide-bonded: cysteine 419–cysteine 455, cysteine 625–cysteine 654, cysteine 662–cysteine 673, cysteine 667–cysteine 682, and cysteine 684–cysteine 694. Positions 658–695 (SGKQCDSYPCKNKGLCKEGWNRFICDCTGTGYWSRTCE) constitute an EGF-like 2 domain. Laminin G-like domains follow at residues 700–872 (ILSY…IDFC) and 886–1061 (DPVT…ERGC). Intrachain disulfides connect cysteine 1033/cysteine 1061, cysteine 1077/cysteine 1088, cysteine 1082/cysteine 1097, and cysteine 1099/cysteine 1109. One can recognise an EGF-like 3 domain in the interval 1073 to 1110 (PSTTCQEDSCANMGICIQQWENYTCDCSMTSYTGTHCN). The region spanning 1114–1314 (TTYIFGKGGG…NPNIKINGSV (201 aa)) is the Laminin G-like 6 domain. Disordered stretches follow at residues 1345–1366 (TMSTTTTRKHRTPPTIQTTDDM), 1442–1479 (LSDGGSDDCGDDDDDDDDDGLMISGYGSGEAYDSNLPP), and 1520–1557 (PNKVFDSGRTTTASFSPKLSRSTTTSTPPKLPAGKMNH). Residues 1446–1461 (GSDDCGDDDDDDDDDG) are compositionally biased toward acidic residues. Positions 1527-1547 (GRTTTASFSPKLSRSTTTSTP) are enriched in polar residues. Residues 1623–1643 (GMVVGIVAAAALCILILLYAM) form a helical membrane-spanning segment. At 1644–1697 (YKYRNRDEGSYQVDETRNYITNSAQSNGAVMKDKQQSTKSGNKKQKNKDKEYYV) the chain is on the cytoplasmic side. Residues 1665-1697 (NSAQSNGAVMKDKQQSTKSGNKKQKNKDKEYYV) are disordered.

This sequence belongs to the neurexin family.

The protein localises to the membrane. In terms of biological role, neuronal cell surface protein that may be involved in cell recognition and cell adhesion. This is Neurexin-3a (nrxn3a) from Danio rerio (Zebrafish).